Consider the following 228-residue polypeptide: PKHD-type hydroxylase RPE_4577 (228 aa).

The Fe2OG dioxygenase domain occupies 78–180; that stretch reads TIFPPLFNRY…RIASFFWTQS (103 aa). Residues H98, D100, and H161 each coordinate Fe cation. Residue R171 participates in 2-oxoglutarate binding.

Fe(2+) serves as cofactor. The cofactor is L-ascorbate.

This is PKHD-type hydroxylase RPE_4577 from Rhodopseudomonas palustris (strain BisA53).